Consider the following 361-residue polypeptide: MTATWSVNKKIFLQNAITVKNNQPLMAVVKNNAYHYDLEFAVTQFIHAGIDTFSTTSLREAIQIRQLAPDATIFLMNAVYEFDLVREHQIHMTLPSLTYYYNHKNDLAGIHVHLEFENLLHRSGFKDLNEIKEVLKDHHHNQNAKMIISGLWTHFGYADEFDVSDYNVERSQWMEIVEALLSEGYQFDLIHAQNSASFYREGQILLPHHTHARVGIALYGSRPYSSLNQHDIVQSLTLKAHVIQVREVQAGDYCGYSFAFEVTKNNTKLAVVDIGYGDGILRTRAKHEALINGKRYPIRALMMSHMFVEVDGNVHAQDEVILYNNDIRIDEYTFKGVGANSEQLSAMNHDSLKKEYISNDC.

Lys-30 acts as the Proton acceptor; specific for D-alanine in catalysis. N6-(pyridoxal phosphate)lysine is present on Lys-30. Arg-122 contributes to the substrate binding site. Tyr-256 acts as the Proton acceptor; specific for L-alanine in catalysis. Met-303 is a substrate binding site.

The protein belongs to the alanine racemase family. The cofactor is pyridoxal 5'-phosphate.

It carries out the reaction L-alanine = D-alanine. Its pathway is amino-acid biosynthesis; D-alanine biosynthesis; D-alanine from L-alanine: step 1/1. Functionally, catalyzes the interconversion of L-alanine and D-alanine. May also act on other amino acids. The polypeptide is Alanine racemase 2 (alr2) (Staphylococcus aureus (strain COL)).